We begin with the raw amino-acid sequence, 784 residues long: 1-phosphatidylinositol 4,5-bisphosphate phosphodiesterase delta-3-A (784 aa).

The segment at 1–25 (MLGRKKNPETVQTESKSVESKTHDP) is disordered. Residues 16–25 (KSVESKTHDP) are compositionally biased toward basic and acidic residues. In terms of domain architecture, PH spans 38–149 (LLMLQGSKMM…WVRGIRTLKD (112 aa)). The tract at residues 48–78 (KVRSQRWRKDRRLKLLEDCVTVWCESSKTSR) is substrate binding. 3 EF-hand domains span residues 159–194 (KLDHWIRGYLRRADQNQDGKMSYDEVKHLLQLINID), 195–230 (LNEQYARTLFKKCDRSCDGRLDHVEIEEFCREMMRR), and 227–262 (MMRRPELDAVFRHYSGNGCVLTTLELRDFLGDQGED). The Ca(2+) site is built by Asp172, Asn174, Asp176, Lys178, Glu183, Asp208, Ser210, Asp212, Arg214, and Glu219. Positions 313–458 (QDMSKPLAHY…LKGRILLKGK (146 aa)) constitute a PI-PLC X-box domain. The active site involves His328. 3 residues coordinate Ca(2+): Asn329, Glu358, and Asp360. His373 is a catalytic residue. Glu407 contributes to the Ca(2+) binding site. Lys456 and Lys458 together coordinate substrate. Residues 473–498 (FTNSSDEESVAGGNKKESKKDLARSA) form a disordered region. Residues 486–495 (NKKESKKDLA) are compositionally biased toward basic and acidic residues. The 116-residue stretch at 506–621 (LSDLVVYCQS…GYVLKPEFLC (116 aa)) folds into the PI-PLC Y-box domain. Substrate contacts are provided by Ser534 and Arg561. Residues 621 to 750 (CDPKSDFDPE…TGYRHVHLLK (130 aa)) enclose the C2 domain. Ile664, Asp666, Asn690, Asp719, and Asp721 together coordinate Ca(2+).

Ca(2+) serves as cofactor.

Its subcellular location is the membrane. The protein localises to the cytoplasm. It localises to the cleavage furrow. It catalyses the reaction a 1,2-diacyl-sn-glycero-3-phospho-(1D-myo-inositol-4,5-bisphosphate) + H2O = 1D-myo-inositol 1,4,5-trisphosphate + a 1,2-diacyl-sn-glycerol + H(+). In terms of biological role, hydrolyzes the phosphatidylinositol 4,5-bisphosphate (PIP2) to generate 2 second messenger molecules diacylglycerol (DAG) and inositol 1,4,5-trisphosphate (IP3). DAG mediates the activation of protein kinase C (PKC), while IP3 releases Ca(2+) from intracellular stores. The chain is 1-phosphatidylinositol 4,5-bisphosphate phosphodiesterase delta-3-A (plcd3a) from Danio rerio (Zebrafish).